A 413-amino-acid polypeptide reads, in one-letter code: Probable isoleucine--tRNA ligase, mitochondrial (413 aa).

The short motif at 298–302 (KMSKS) is the 'KMSKS' region element. Lys-301 serves as a coordination point for ATP.

This sequence belongs to the class-I aminoacyl-tRNA synthetase family.

It localises to the mitochondrion matrix. It catalyses the reaction tRNA(Ile) + L-isoleucine + ATP = L-isoleucyl-tRNA(Ile) + AMP + diphosphate. The polypeptide is Probable isoleucine--tRNA ligase, mitochondrial (Ciona intestinalis (Transparent sea squirt)).